A 179-amino-acid polypeptide reads, in one-letter code: Replication restart protein DnaT (179 aa).

The disordered stretch occupies residues 156-179 (GGLPKRDVNTVSEPDSQIPPGFRG).

The protein belongs to the DnaT family. In terms of assembly, homooligomerizes. Interacts with PriB. Component of the replication restart primosome. Primosome assembly occurs via a 'hand-off' mechanism. PriA binds to replication forks, subsequently PriB then DnaT bind; DnaT then displaces ssDNA to generate the helicase loading substrate.

In terms of biological role, involved in the restart of stalled replication forks, which reloads the replicative helicase on sites other than the origin of replication. Can function in multiple replication restart pathways. Displaces ssDNA from a PriB-ssDNA complex. Probably forms a spiral filament on ssDNA. This chain is Replication restart protein DnaT, found in Escherichia coli O157:H7.